A 504-amino-acid polypeptide reads, in one-letter code: Anaerobic nitric oxide reductase transcription regulator NorR (504 aa).

The residue at position 57 (D57) is a 4-aspartylphosphate. The Sigma-54 factor interaction domain maps to 187-416; the sequence is MIGLSPGMTQ…LEHAIHRAVV (230 aa). Residues 215–222 and 278–287 each bind ATP; these read GETGTGKE and ADNGTLFLDE. The H-T-H motif DNA-binding region spans 479 to 498; sequence WAACARMLETDVANLHRLAK.

The protein operates within nitrogen metabolism; nitric oxide reduction. In terms of biological role, required for the expression of anaerobic nitric oxide (NO) reductase, acts as a transcriptional activator for at least the norVW operon. Activation also requires sigma-54. This Escherichia coli O6:K15:H31 (strain 536 / UPEC) protein is Anaerobic nitric oxide reductase transcription regulator NorR.